A 216-amino-acid polypeptide reads, in one-letter code: Peptide methionine sulfoxide reductase MsrA (216 aa).

Cys-57 is a catalytic residue.

The protein belongs to the MsrA Met sulfoxide reductase family.

The catalysed reaction is L-methionyl-[protein] + [thioredoxin]-disulfide + H2O = L-methionyl-(S)-S-oxide-[protein] + [thioredoxin]-dithiol. The enzyme catalyses [thioredoxin]-disulfide + L-methionine + H2O = L-methionine (S)-S-oxide + [thioredoxin]-dithiol. Functionally, has an important function as a repair enzyme for proteins that have been inactivated by oxidation. Catalyzes the reversible oxidation-reduction of methionine sulfoxide in proteins to methionine. The chain is Peptide methionine sulfoxide reductase MsrA from Agrobacterium fabrum (strain C58 / ATCC 33970) (Agrobacterium tumefaciens (strain C58)).